Reading from the N-terminus, the 183-residue chain is Orotate phosphoribosyltransferase (183 aa).

5-phospho-alpha-D-ribose 1-diphosphate is bound by residues arginine 21, lysine 88, and 112–120 (EDVVTTGES). Positions 116 and 144 each coordinate orotate.

This sequence belongs to the purine/pyrimidine phosphoribosyltransferase family. PyrE subfamily. As to quaternary structure, homodimer. The cofactor is Mg(2+).

The catalysed reaction is orotidine 5'-phosphate + diphosphate = orotate + 5-phospho-alpha-D-ribose 1-diphosphate. It functions in the pathway pyrimidine metabolism; UMP biosynthesis via de novo pathway; UMP from orotate: step 1/2. Catalyzes the transfer of a ribosyl phosphate group from 5-phosphoribose 1-diphosphate to orotate, leading to the formation of orotidine monophosphate (OMP). This Thermus thermophilus (strain ATCC 27634 / DSM 579 / HB8) protein is Orotate phosphoribosyltransferase.